Reading from the N-terminus, the 140-residue chain is UPF0225 protein SAV_6631 (140 aa).

The segment at 1 to 22 (MSKSRRTRSTSRPTSRPQPASC) is disordered. Low complexity predominate over residues 10-19 (TSRPTSRPQP).

It belongs to the UPF0225 family.

The chain is UPF0225 protein SAV_6631 from Streptomyces avermitilis (strain ATCC 31267 / DSM 46492 / JCM 5070 / NBRC 14893 / NCIMB 12804 / NRRL 8165 / MA-4680).